The chain runs to 38 residues: Mu/omega-theraphotoxin-Mb1a (38 aa).

Intrachain disulfides connect cysteine 7–cysteine 21, cysteine 14–cysteine 26, and cysteine 20–cysteine 33. Threonine 38 carries the threonine amide modification.

It belongs to the neurotoxin 10 (Hwtx-1) family. 28 (Jztx-11) subfamily. Expressed by the venom gland.

The protein resides in the secreted. Functionally, paralytic toxin that inhibits insect voltage-gated sodium (Nav) and calcium (Cav) channels in P.americana (American cockroach) dorsal unpaired median (DUM) neurons, and inhibits the B.germanica (German cockroach) Nav channel (BgNaV1). Also shows a delay in fast inactivation when tested on BgNaV1. May act as a gating-modifier toxin on Nav and as a pore blocker on Cav. In vivo, reversibly paralyzes both L.cuprina (Australian sheep blowfly) and M.domestica (housefly), but does not affect larvae of H.armigera (cotton bollworms). The polypeptide is Mu/omega-theraphotoxin-Mb1a (Monocentropus balfouri (Socotra Island blue baboon tarantula)).